The chain runs to 122 residues: Iron-sulfur cluster assembly protein SufA (122 aa).

C50, C114, and C116 together coordinate [2Fe-2S] cluster. C50, C114, and C116 together coordinate [4Fe-4S] cluster.

Belongs to the HesB/IscA family. In terms of assembly, homodimer. Interacts with SufB and SufC.

Functionally, member of gene cluster sufABCDSE that mediates iron-sulfur cluster assembly under oxidative stress and iron limitation conditions. Binds [2Fe-2S] and [4Fe-4S] clusters by mobilizing sulfur atoms provided by the SufS-SufE cysteine desulfurase system and then transfers the assembled Fe-S clusters to target proteins including ferredoxin and aconitase. Seems to act as a Fe-S cluster carrier rather than a scaffold, this role being performed by SufB and SufC. The sequence is that of Iron-sulfur cluster assembly protein SufA (sufA) from Escherichia coli (strain K12).